A 93-amino-acid chain; its full sequence is UPF0358 protein LMHCC_1561 (93 aa).

The protein belongs to the UPF0358 family.

The protein is UPF0358 protein LMHCC_1561 of Listeria monocytogenes serotype 4a (strain HCC23).